We begin with the raw amino-acid sequence, 116 residues long: Large ribosomal subunit protein uL18 (116 aa).

The protein belongs to the universal ribosomal protein uL18 family. In terms of assembly, part of the 50S ribosomal subunit; part of the 5S rRNA/L5/L18/L25 subcomplex. Contacts the 5S and 23S rRNAs.

Functionally, this is one of the proteins that bind and probably mediate the attachment of the 5S RNA into the large ribosomal subunit, where it forms part of the central protuberance. This chain is Large ribosomal subunit protein uL18, found in Exiguobacterium sibiricum (strain DSM 17290 / CCUG 55495 / CIP 109462 / JCM 13490 / 255-15).